Here is a 211-residue protein sequence, read N- to C-terminus: Hypoxanthine-guanine phosphoribosyltransferase (211 aa).

Residues 1–20 form a disordered region; sequence MSNSAKSPSGPVGDEGRRNY. GMP-binding positions include lysine 66, 125–133, lysine 157, and aspartate 185; that span reads EDIVDSAIT. The Proton acceptor role is filled by aspartate 129. Position 185 (aspartate 185) interacts with Mg(2+).

Belongs to the purine/pyrimidine phosphoribosyltransferase family. The cofactor is Mg(2+).

Its subcellular location is the cytoplasm. The enzyme catalyses IMP + diphosphate = hypoxanthine + 5-phospho-alpha-D-ribose 1-diphosphate. The catalysed reaction is GMP + diphosphate = guanine + 5-phospho-alpha-D-ribose 1-diphosphate. It participates in purine metabolism; IMP biosynthesis via salvage pathway; IMP from hypoxanthine: step 1/1. In terms of biological role, converts guanine to guanosine monophosphate, and hypoxanthine to inosine monophosphate. Transfers the 5-phosphoribosyl group from 5-phosphoribosylpyrophosphate onto the purine. Plays a central role in the generation of purine nucleotides through the purine salvage pathway. The protein is Hypoxanthine-guanine phosphoribosyltransferase of Leishmania donovani.